The following is a 366-amino-acid chain: Glutathione S-transferase omega-like 3 (366 aa).

The active site involves Cys46. The GST C-terminal domain occupies 197–349; that stretch reads PRSLEAQITE…LGYTRSQPRV (153 aa).

Belongs to the GST superfamily. Omega family.

It is found in the cytoplasm. It catalyses the reaction RX + glutathione = an S-substituted glutathione + a halide anion + H(+). In terms of biological role, active as '1-Cys' thiol transferase against beta-hydroxyethyl disulfide (HED), as dehydroascorbate reductase and as dimethylarsinic acid reductase, while not active against the standard GST substrate 1-chloro-2,4-dinitrobenzene (CDNB). The polypeptide is Glutathione S-transferase omega-like 3 (GTO3) (Saccharomyces cerevisiae (strain ATCC 204508 / S288c) (Baker's yeast)).